A 370-amino-acid polypeptide reads, in one-letter code: 4-hydroxy-3-methylbut-2-en-1-yl diphosphate synthase (flavodoxin) (370 aa).

The [4Fe-4S] cluster site is built by Cys-271, Cys-274, Cys-306, and Glu-313.

The protein belongs to the IspG family. It depends on [4Fe-4S] cluster as a cofactor.

It catalyses the reaction (2E)-4-hydroxy-3-methylbut-2-enyl diphosphate + oxidized [flavodoxin] + H2O + 2 H(+) = 2-C-methyl-D-erythritol 2,4-cyclic diphosphate + reduced [flavodoxin]. It functions in the pathway isoprenoid biosynthesis; isopentenyl diphosphate biosynthesis via DXP pathway; isopentenyl diphosphate from 1-deoxy-D-xylulose 5-phosphate: step 5/6. Functionally, converts 2C-methyl-D-erythritol 2,4-cyclodiphosphate (ME-2,4cPP) into 1-hydroxy-2-methyl-2-(E)-butenyl 4-diphosphate. In Actinobacillus pleuropneumoniae serotype 5b (strain L20), this protein is 4-hydroxy-3-methylbut-2-en-1-yl diphosphate synthase (flavodoxin).